Here is a 282-residue protein sequence, read N- to C-terminus: Aldo-keto reductase ML1669 (282 aa).

Tyr-57 (proton donor) is an active-site residue. NADPH is bound by residues Leu-197, Val-235, Arg-237, Ser-238, Ala-239, Ser-246, Asn-247, and Arg-273.

It belongs to the aldo/keto reductase family.

The chain is Aldo-keto reductase ML1669 from Mycobacterium leprae (strain TN).